The chain runs to 132 residues: C-X-C motif chemokine 5 (132 aa).

Residues methionine 1 to alanine 40 form the signal peptide. Disulfide bonds link cysteine 53-cysteine 79 and cysteine 55-cysteine 95.

The protein belongs to the intercrine alpha (chemokine CxC) family. Monomer. Homodimer. GCP-2(1-78) and GCP-2(9-78) are produced by proteolytic cleavage after secretion from fibroblasts and epithelial cells. GCP-2(9-78) is the most prominent form. A number of additional N-terminal (processed between pos. 41 and 48) and C-terminal (processed between pos. 118 and 132) processed forms have been identified, probably also representing intermediate states.

The protein localises to the secreted. In terms of biological role, may participate in the recruitment of inflammatory cells by injured or infected tissue. GCP-2(1-78) and, more potent, GCP-2(9-78) attract neutrophils and are involved in neutrophil activation. In Mus musculus (Mouse), this protein is C-X-C motif chemokine 5 (Cxcl5).